A 194-amino-acid polypeptide reads, in one-letter code: UPF0215 protein TV0037 (194 aa).

Belongs to the UPF0215 family.

This chain is UPF0215 protein TV0037, found in Thermoplasma volcanium (strain ATCC 51530 / DSM 4299 / JCM 9571 / NBRC 15438 / GSS1).